We begin with the raw amino-acid sequence, 570 residues long: Sulfite reductase [NADPH] hemoprotein beta-component (570 aa).

Residues cysteine 434, cysteine 440, cysteine 479, and cysteine 483 each coordinate [4Fe-4S] cluster. Residue cysteine 483 coordinates siroheme.

It belongs to the nitrite and sulfite reductase 4Fe-4S domain family. As to quaternary structure, alpha(8)-beta(8). The alpha component is a flavoprotein, the beta component is a hemoprotein. Siroheme serves as cofactor. [4Fe-4S] cluster is required as a cofactor.

It carries out the reaction hydrogen sulfide + 3 NADP(+) + 3 H2O = sulfite + 3 NADPH + 4 H(+). Its pathway is sulfur metabolism; hydrogen sulfide biosynthesis; hydrogen sulfide from sulfite (NADPH route): step 1/1. Functionally, component of the sulfite reductase complex that catalyzes the 6-electron reduction of sulfite to sulfide. This is one of several activities required for the biosynthesis of L-cysteine from sulfate. In Salmonella heidelberg (strain SL476), this protein is Sulfite reductase [NADPH] hemoprotein beta-component.